A 223-amino-acid chain; its full sequence is Golgi SNAP receptor complex member 1-1 (223 aa).

Residues 1-201 are Cytoplasmic-facing; that stretch reads MDVPSSWDAL…AAIKRKKSMD (201 aa). Residues 8–67 are a coiled coil; it reads DALRKQARKIEAQLDEQMHSYRRLVSTKALSKSDGNESDLEAGIDLLLRQLQQVNAQMQA. Residues 202–222 traverse the membrane as a helical; Anchor for type IV membrane protein segment; the sequence is TIILSLVAAVCTFLIFIYWIT. Position 223 (Lys223) is a topological domain, vesicular.

The protein belongs to the GOSR1 family. In terms of assembly, component of several multiprotein Golgi SNARE complexes.

The protein localises to the golgi apparatus membrane. In terms of biological role, involved in transport from the ER to the Golgi apparatus as well as in intra-Golgi transport. It belongs to a super-family of proteins called t-SNAREs or soluble NSF (N-ethylmaleimide-sensitive factor) attachment protein receptor. The chain is Golgi SNAP receptor complex member 1-1 (GOS11) from Arabidopsis thaliana (Mouse-ear cress).